Reading from the N-terminus, the 253-residue chain is ATP synthase subunit a (253 aa).

The next 6 helical transmembrane spans lie at 34 to 54 (SSLFLIIAVFLLLFWTSLSFY), 89 to 109 (YFPFIFTLHLLLLYCNLIGMI), 118 to 138 (HIVFTFGLALSIFIGINLIGI), 156 to 178 (LAIVPLLITIEFLSYIVKVFTLS), 203 to 223 (LSAGGLLAIFHLIPLALLLAL), and 226 to 246 (LELAIAGLQAYVFTLLTCIYL).

This sequence belongs to the ATPase A chain family. F-type ATPases have 2 components, CF(1) - the catalytic core - and CF(0) - the membrane proton channel. CF(1) has five subunits: alpha(3), beta(3), gamma(1), delta(1), epsilon(1). CF(0) has three main subunits: a, b and c.

It localises to the mitochondrion inner membrane. In terms of biological role, mitochondrial membrane ATP synthase (F(1)F(0) ATP synthase or Complex V) produces ATP from ADP in the presence of a proton gradient across the membrane which is generated by electron transport complexes of the respiratory chain. F-type ATPases consist of two structural domains, F(1) - containing the extramembraneous catalytic core and F(0) - containing the membrane proton channel, linked together by a central stalk and a peripheral stalk. During catalysis, ATP synthesis in the catalytic domain of F(1) is coupled via a rotary mechanism of the central stalk subunits to proton translocation. Key component of the proton channel; it may play a direct role in the translocation of protons across the membrane. The chain is ATP synthase subunit a (ATP6) from Chondrus crispus (Carrageen Irish moss).